Consider the following 252-residue polypeptide: 2-succinyl-6-hydroxy-2,4-cyclohexadiene-1-carboxylate synthase (252 aa).

Belongs to the AB hydrolase superfamily. MenH family. Monomer.

It catalyses the reaction 5-enolpyruvoyl-6-hydroxy-2-succinyl-cyclohex-3-ene-1-carboxylate = (1R,6R)-6-hydroxy-2-succinyl-cyclohexa-2,4-diene-1-carboxylate + pyruvate. The protein operates within quinol/quinone metabolism; 1,4-dihydroxy-2-naphthoate biosynthesis; 1,4-dihydroxy-2-naphthoate from chorismate: step 3/7. Its pathway is quinol/quinone metabolism; menaquinone biosynthesis. In terms of biological role, catalyzes a proton abstraction reaction that results in 2,5-elimination of pyruvate from 2-succinyl-5-enolpyruvyl-6-hydroxy-3-cyclohexene-1-carboxylate (SEPHCHC) and the formation of 2-succinyl-6-hydroxy-2,4-cyclohexadiene-1-carboxylate (SHCHC). The chain is 2-succinyl-6-hydroxy-2,4-cyclohexadiene-1-carboxylate synthase from Salmonella schwarzengrund (strain CVM19633).